A 345-amino-acid chain; its full sequence is MRVVVAMSGGVDSSVVAGLMHEAGHEVIGVTLQLYDHGAATGRKGACCAGQDIHDARNVADRLGIAHYVIDAEAAFRAAVIGDFAESYAEGRTPVPCVRCNQHLKFGDLLGLARDLGAEALATGHYVRREDGPEGAELHRAVDARRDQSWFLFATTRDQLAFSRFPLGTMPDKDAVRAEAARMNLPVAEKPDSQDICFVPSGTYADIVAKLRPDAAAPGEIVTEDGAVLDRHQGIARYTVGQAKRLGAASGHVVTRIDAARRRIVVGPRGAGGREVRIAEPNWLIDPPAAPFRASVKLRAGETPHPAEIDIARNLVTLDTPALAAPGQACVVYRESRVLGGGFIL.

Residues 6 to 13 (AMSGGVDS) and L32 contribute to the ATP site. The active-site Nucleophile is C100. A disulfide bond links C100 and C197. ATP is bound at residue G124. The tract at residues 146 to 148 (RDQ) is interaction with tRNA. C197 functions as the Cysteine persulfide intermediate in the catalytic mechanism.

This sequence belongs to the MnmA/TRMU family.

It is found in the cytoplasm. It catalyses the reaction S-sulfanyl-L-cysteinyl-[protein] + uridine(34) in tRNA + AH2 + ATP = 2-thiouridine(34) in tRNA + L-cysteinyl-[protein] + A + AMP + diphosphate + H(+). Functionally, catalyzes the 2-thiolation of uridine at the wobble position (U34) of tRNA, leading to the formation of s(2)U34. This chain is tRNA-specific 2-thiouridylase MnmA, found in Acidiphilium cryptum (strain JF-5).